The primary structure comprises 585 residues: Amyloid protein-binding protein 2 (585 aa).

TPR repeat units lie at residues 50-83 (QGRL…HHCF), 120-153 (IQVG…CTLH), 206-239 (AALY…ITAG), 288-321 (SDTL…RQSV), 333-367 (HEDL…ITHI), 429-462 (AKHY…KEQL), 471-505 (ALSV…GKKL), and 514-547 (EYDY…NRLR).

As to quaternary structure, component of a CRL2 E3 ubiquitin-protein ligase complex, also named ECS (Elongin BC-CUL2/5-SOCS-box protein) complex, composed of CUL2, Elongin BC (ELOB and ELOC), RBX1 and substrate-specific adapter APPBP2. Interacts with APP; APP interaction inhibits the E3 ubiquitin-protein ligase activity of the CRL2(APPBP2) complex. Rapidly degraded by the proteasome upon overexpression of a C-terminal fragment of APP.

The protein localises to the nucleus. Its subcellular location is the cytoplasm. The protein resides in the cytoskeleton. It localises to the membrane. The protein operates within protein modification; protein ubiquitination. Its activity is regulated as follows. E3 ubiquitin-protein ligase activity of the CRL2(APPBP2) complex is inhibited by APP. In terms of biological role, substrate-recognition component of a Cul2-RING (CRL2) E3 ubiquitin-protein ligase complex of the DesCEND (destruction via C-end degrons) pathway, which recognizes a C-degron located at the extreme C terminus of target proteins, leading to their ubiquitination and degradation. The C-degron recognized by the DesCEND pathway is usually a motif of less than ten residues and can be present in full-length proteins, truncated proteins or proteolytically cleaved forms. The CRL2(APPBP2) complex specifically recognizes proteins with a -Arg-Xaa-Xaa-Gly degron at the C-terminus, leading to their ubiquitination and degradation. The CRL2(APPBP2) complex mediates ubiquitination and degradation of truncated SELENOV selenoproteins produced by failed UGA/Sec decoding, which end with a -Arg-Xaa-Xaa-Gly degron. May play a role in intracellular protein transport: may be involved in the translocation of APP along microtubules toward the cell surface. The chain is Amyloid protein-binding protein 2 from Mus musculus (Mouse).